Consider the following 543-residue polypeptide: CTP synthase (543 aa).

Positions 1–267 (MKQTKYIFVT…LSPIAEILDL (267 aa)) are amidoligase domain. Ser15 contributes to the CTP binding site. Ser15 lines the UTP pocket. ATP-binding positions include 16-21 (SLGKGI) and Asp73. 2 residues coordinate Mg(2+): Asp73 and Glu141. CTP is bound by residues 148-150 (DIE), 188-193 (KTKPTQ), and Lys224. UTP is bound by residues 188–193 (KTKPTQ) and Lys224. A Glutamine amidotransferase type-1 domain is found at 292–543 (KIAFVGKYVD…IKAAINYEDN (252 aa)). Gly354 is a binding site for L-glutamine. Residue Cys381 is the Nucleophile; for glutamine hydrolysis of the active site. L-glutamine is bound by residues 382-385 (LGMQ), Glu405, and Arg473. Residues His516 and Glu518 contribute to the active site.

The protein belongs to the CTP synthase family. In terms of assembly, homotetramer.

It carries out the reaction UTP + L-glutamine + ATP + H2O = CTP + L-glutamate + ADP + phosphate + 2 H(+). It catalyses the reaction L-glutamine + H2O = L-glutamate + NH4(+). The catalysed reaction is UTP + NH4(+) + ATP = CTP + ADP + phosphate + 2 H(+). It participates in pyrimidine metabolism; CTP biosynthesis via de novo pathway; CTP from UDP: step 2/2. Allosterically activated by GTP, when glutamine is the substrate; GTP has no effect on the reaction when ammonia is the substrate. The allosteric effector GTP functions by stabilizing the protein conformation that binds the tetrahedral intermediate(s) formed during glutamine hydrolysis. Inhibited by the product CTP, via allosteric rather than competitive inhibition. Catalyzes the ATP-dependent amination of UTP to CTP with either L-glutamine or ammonia as the source of nitrogen. Regulates intracellular CTP levels through interactions with the four ribonucleotide triphosphates. The polypeptide is CTP synthase (Campylobacter jejuni subsp. jejuni serotype O:6 (strain 81116 / NCTC 11828)).